A 224-amino-acid chain; its full sequence is CDP-diacylglycerol--inositol 3-phosphatidyltransferase (224 aa).

The Cytoplasmic portion of the chain corresponds to 1-8; the sequence is MTIAEHDN. Residues 9-29 form a helical membrane-spanning segment; it reads VFIFVPNLIGYARIVLALIAF. The Lumenal segment spans residues 30–35; sequence WFMSTN. The helical transmembrane segment at 36 to 52 threads the bilayer; sequence YVISGWCYVTSALLDAV. 2 residues coordinate Mg(2+): aspartate 50 and aspartate 53. Topologically, residues 53–76 are cytoplasmic; it reads DGQAARAFNQSTRFGAMLDQLTDR. A CDP-1,2-diacyl-sn-glycerol contacts are provided by glycine 54, arginine 58, and threonine 64. Residues aspartate 71 and aspartate 75 each contribute to the Mg(2+) site. Aspartate 75 acts as the Proton acceptor in catalysis. A helical membrane pass occupies residues 77–97; sequence CGTTGLLVTLAYFYPRYMFWF. Residue glutamine 98 is a topological domain, lumenal. Residues 99-119 form a helical membrane-spanning segment; sequence LSIAIDVACHWLFMQTSVVVG. At 120 to 138 the chain is on the cytoplasmic side; that stretch reads RSSHKVNDNFIMRLYYQKD. A helical transmembrane segment spans residues 139 to 159; the sequence is ILTFMCCVNELFYVCLYLLHF. At 160–163 the chain is on the lumenal side; sequence TYGP. A helical membrane pass occupies residues 164-184; sequence LIFGASLFKILAFLTGPFAVL. The Cytoplasmic segment spans residues 185-224; sequence KALISVMHAYVAGIDLAAVDVRERQERRQKSEPVSGKKVE.

Belongs to the CDP-alcohol phosphatidyltransferase class-I family. Mn(2+) serves as cofactor. It depends on Mg(2+) as a cofactor. As to expression, in adults, expression is higher in the head than in the body (at protein level).

It is found in the apical cell membrane. It localises to the lateral cell membrane. It carries out the reaction a CDP-1,2-diacyl-sn-glycerol + myo-inositol = a 1,2-diacyl-sn-glycero-3-phospho-(1D-myo-inositol) + CMP + H(+). Catalyzes the biosynthesis of phosphatidylinositol (PtdIns) as well as PtdIns:inositol exchange reaction. May thus act to reduce an excessive cellular PtdIns content. The exchange activity is due to the reverse reaction of PtdIns synthase and is dependent on CMP, which is tightly bound to the enzyme. Required for the regeneration of the signaling molecule phosphatidylinositol 4,5-bisphosphate (PtdInsP2) from phosphatidic acid (PA) and maintenance of its steady supply during signaling, thus playing an essential role during phospholipase C-mediated transduction. This function is essential in photoreceptors for light-activated recycling of PtdInsP2 during phototransduction. As a key enzyme of the phosphoinositide pathway, indirectly involved in the polarized secretion of basal membrane (BM) proteins in follicle epithelial (FE) cells through promoting PtdInsP2 synthesis in the apical and lateral plasma membranes of FE cells. PtdInsP2 controls the localization of Crag and perhaps the localization and expression of strat, both of which are essential for restricting the secretion of BM proteins to the basal surface. The sequence is that of CDP-diacylglycerol--inositol 3-phosphatidyltransferase from Drosophila melanogaster (Fruit fly).